A 213-amino-acid chain; its full sequence is High frequency lysogenization protein HflD homolog (213 aa).

The stretch at 79–126 forms a coiled coil; sequence QGLNAELTRYTLSLMVLERKLSSAKGALDTLGNRINGLQRQLEHFDLQ.

The protein belongs to the HflD family.

The protein resides in the cytoplasm. Its subcellular location is the cell inner membrane. This is High frequency lysogenization protein HflD homolog from Shigella boydii serotype 18 (strain CDC 3083-94 / BS512).